Here is a 52-residue protein sequence, read N- to C-terminus: UPF0181 protein HD_1137 (52 aa).

The protein belongs to the UPF0181 family.

This is UPF0181 protein HD_1137 from Haemophilus ducreyi (strain 35000HP / ATCC 700724).